A 313-amino-acid polypeptide reads, in one-letter code: Porphobilinogen deaminase (313 aa).

At Cys-242 the chain carries S-(dipyrrolylmethanemethyl)cysteine.

The protein belongs to the HMBS family. Monomer. It depends on dipyrromethane as a cofactor.

It carries out the reaction 4 porphobilinogen + H2O = hydroxymethylbilane + 4 NH4(+). It functions in the pathway porphyrin-containing compound metabolism; protoporphyrin-IX biosynthesis; coproporphyrinogen-III from 5-aminolevulinate: step 2/4. In terms of biological role, tetrapolymerization of the monopyrrole PBG into the hydroxymethylbilane pre-uroporphyrinogen in several discrete steps. The polypeptide is Porphobilinogen deaminase (hemC) (Proteus mirabilis).